Reading from the N-terminus, the 200-residue chain is ATP synthase subunit s, mitochondrial (200 aa).

The transit peptide at 1–25 (MMLFGKVSQQLCGIKKLPWSCDSRY) directs the protein to the mitochondrion. The tract at residues 1-61 (MMLFGKVSQQ…SEWLLRCGAM (61 aa)) is N-terminal domain. G59 serves as a coordination point for Mg(2+). LRR repeat units lie at residues 62–87 (VRYHGQERWQTDYNHLPTGPLDKYKI), 88–116 (QAIDATNSCIMSIGFDHMVGLQHVEKIRL), 117–141 (CKCHFIEDDCLLRLGQLENLQKSIL), and 142–173 (EMEIISCGNITDKGIIASRHLRNLKYLLLSDL). T93 contributes to the Mg(2+) binding site.

Belongs to the ATP synthase subunit s family. In terms of assembly, homotetramer. Associates with ATP synthase.

It localises to the mitochondrion. It is found in the mitochondrion inner membrane. In terms of biological role, involved in regulation of mitochondrial membrane ATP synthase. Necessary for H(+) conduction of ATP synthase. Facilitates energy-driven catalysis of ATP synthesis by blocking a proton leak through an alternative proton exit pathway. The polypeptide is ATP synthase subunit s, mitochondrial (DMAC2L) (Macaca fascicularis (Crab-eating macaque)).